The sequence spans 349 residues: tRNA pseudouridine synthase D (349 aa).

Catalysis depends on aspartate 77, which acts as the Nucleophile. The region spanning 151–309 is the TRUD domain; it reads GVPNYFGEQR…ETIDESTLKL (159 aa).

It belongs to the pseudouridine synthase TruD family.

The enzyme catalyses uridine(13) in tRNA = pseudouridine(13) in tRNA. Responsible for synthesis of pseudouridine from uracil-13 in transfer RNAs. The polypeptide is tRNA pseudouridine synthase D (Pseudoalteromonas translucida (strain TAC 125)).